The primary structure comprises 93 residues: Large ribosomal subunit protein uL23 (93 aa).

The protein belongs to the universal ribosomal protein uL23 family. In terms of assembly, part of the 50S ribosomal subunit. Contacts protein L29, and trigger factor when it is bound to the ribosome.

Its function is as follows. One of the early assembly proteins it binds 23S rRNA. One of the proteins that surrounds the polypeptide exit tunnel on the outside of the ribosome. Forms the main docking site for trigger factor binding to the ribosome. The sequence is that of Large ribosomal subunit protein uL23 from Helicobacter acinonychis (strain Sheeba).